The primary structure comprises 296 residues: 33 kDa chaperonin (296 aa).

Intrachain disulfides connect Cys-238–Cys-240 and Cys-271–Cys-274.

The protein belongs to the HSP33 family. Under oxidizing conditions two disulfide bonds are formed involving the reactive cysteines. Under reducing conditions zinc is bound to the reactive cysteines and the protein is inactive.

It is found in the cytoplasm. Redox regulated molecular chaperone. Protects both thermally unfolding and oxidatively damaged proteins from irreversible aggregation. Plays an important role in the bacterial defense system toward oxidative stress. The protein is 33 kDa chaperonin of Clostridium botulinum (strain ATCC 19397 / Type A).